The sequence spans 217 residues: Trimethylamine corrinoid protein (217 aa).

The 92-residue stretch at 1 to 92 (MANKEEIIAK…EMEKRKSQTK (92 aa)) folds into the B12-binding N-terminal domain. The B12-binding domain maps to 94-217 (LGTVAIGTIE…VAKVKAALNV (124 aa)). Histidine 107 is a methylcob(III)alamin binding site.

It belongs to the methylamine corrinoid protein family. Can form a complex with MttB.

It functions in the pathway one-carbon metabolism; methanogenesis from trimethylamine. Acts probably as a methyl group carrier between MttB and either MtbA or MtaA. The protein is Trimethylamine corrinoid protein of Methanosarcina barkeri.